The sequence spans 411 residues: Inhibin beta B chain (411 aa).

An N-terminal signal peptide occupies residues 1–28 (MDGLPGRALGAACLLLLVAGWLGPEAWG). The interval 28-69 (GSPTPPPSPAAPPPPPPPGAPGGSQDTCTSCGGGGGGFRRPE) is disordered. Residues 29–296 (SPTPPPSPAA…GDSRHRIRKR (268 aa)) constitute a propeptide that is removed on maturation. Residues 30–47 (PTPPPSPAAPPPPPPPGA) are compositionally biased toward pro residues. N-linked (GlcNAc...) asparagine glycosylation occurs at Asn97. Intrachain disulfides connect Cys300–Cys308, Cys307–Cys376, Cys336–Cys408, and Cys340–Cys410.

Belongs to the TGF-beta family. As to quaternary structure, dimeric, linked by one or more disulfide bonds. Inhibin B is a dimer of alpha and beta-B. Activin B is a homodimer of beta-B. Activin AB is a dimer of beta-A and beta-B. Interacts with FST and FSTL3. Activin B interacts with BMPR2. As to expression, uterus, testis, ovary, lung, kidney, brain, CJ7 embryonic stem cells, and possibly in liver.

It is found in the secreted. Functionally, inhibins and activins inhibit and activate, respectively, the secretion of follitropin by the pituitary gland. Inhibins/activins are involved in regulating a number of diverse functions such as hypothalamic and pituitary hormone secretion, gonadal hormone secretion, germ cell development and maturation, erythroid differentiation, insulin secretion, nerve cell survival, embryonic axial development or bone growth, depending on their subunit composition. Inhibins appear to oppose the functions of activins. Its function is as follows. Activin B is a dimer of alpha and beta-B that plays a role in several essential biological processes including embryonic development, stem cell maintenance and differentiation, haematopoiesis, cell proliferation and wound healing. Signals through type I receptor ACVR1C, abundantly expressed in pancreatic beta cells, and type II receptors like ACVR2A. Upon ligand binding, these receptors phosphorylate intracellular signaling mediators SMAD2 and SMAD3, which form a complex with SMAD4, translocate to the nucleus, and regulate gene expression. Plays a crucial role in the induction of hepcidin by inflammation through activation of ACVR1C and subsequent phosphorylation of SMAD1/5/8. Regulates adipocyte lipid metabolism by decreasing non-esterified fatty acids and glycerol release and increases intracellular triglyceride content. Stimulates wound healing by promoting cell migration and hair follicle regeneration through the JNK and ERK signaling pathways downstream of RHOA. Inhibin B is a dimer of alpha and beta-B that plays a crucial role in the regulation of the reproductive system by inhibiting the secretion of follicle-stimulating hormone (FSH) from the anterior pituitary gland. Thereby, maintains reproductive homeostasis in both males and females. Acts as a more potent suppressor of FSH release than inhibin A. Functions as competitive receptor antagonist binding activin type II receptors with high affinity in the presence of the TGF-beta type III coreceptor/TGFBR3L. The protein is Inhibin beta B chain (Inhbb) of Mus musculus (Mouse).